The sequence spans 238 residues: Ubiquinone biosynthesis O-methyltransferase (238 aa).

The S-adenosyl-L-methionine site is built by Arg-38, Gly-57, Asp-78, and Leu-124.

It belongs to the methyltransferase superfamily. UbiG/COQ3 family.

The catalysed reaction is a 3-demethylubiquinol + S-adenosyl-L-methionine = a ubiquinol + S-adenosyl-L-homocysteine + H(+). It catalyses the reaction a 3-(all-trans-polyprenyl)benzene-1,2-diol + S-adenosyl-L-methionine = a 2-methoxy-6-(all-trans-polyprenyl)phenol + S-adenosyl-L-homocysteine + H(+). It participates in cofactor biosynthesis; ubiquinone biosynthesis. Its function is as follows. O-methyltransferase that catalyzes the 2 O-methylation steps in the ubiquinone biosynthetic pathway. The chain is Ubiquinone biosynthesis O-methyltransferase from Marinobacter nauticus (strain ATCC 700491 / DSM 11845 / VT8) (Marinobacter aquaeolei).